The primary structure comprises 350 residues: Casein kinase II subunit alpha' (350 aa).

Y13 carries the post-translational modification Phosphotyrosine. 2 positions are modified to phosphoserine: S18 and S21. Residues 40-325 (YQLVRKLGRG…AKEAMEHPYF (286 aa)) enclose the Protein kinase domain. ATP contacts are provided by residues 46-54 (LGRGKYSEV) and K69. At K97 the chain carries N6-acetyllysine. The Proton acceptor role is filled by D157. S288 is modified (phosphoserine).

It belongs to the protein kinase superfamily. Ser/Thr protein kinase family. CK2 subfamily. As to quaternary structure, heterotetramer composed of two catalytic subunits (alpha chain and/or alpha' chain) and two regulatory subunits (beta chains). The tetramer can exist as a combination of 2 alpha/2 beta, 2 alpha'/2 beta or 1 alpha/1 alpha'/2 beta subunits. Also part of a CK2-SPT16-SSRP1 complex composed of SSRP1, SUPT16H, CSNK2A1, CSNK2A2 and CSNK2B, which forms following UV irradiation. Interacts with RNPS1. Interacts with CSNK2A2IP (via C-terminus). Interacts with SIRT6; preventing CSNK2A2 localization to the nucleus. Interacts with HIRIP3. In terms of tissue distribution, highly expressed in brain, testis and mature epididymal spermatozoa. Weakly expressed in kidney, liver, lung, spleen and thymus (at protein level).

It localises to the nucleus. The protein localises to the cytoplasm. The enzyme catalyses L-seryl-[protein] + ATP = O-phospho-L-seryl-[protein] + ADP + H(+). It carries out the reaction L-threonyl-[protein] + ATP = O-phospho-L-threonyl-[protein] + ADP + H(+). With respect to regulation, constitutively active protein kinase whose activity is not directly affected by phosphorylation. Seems to be regulated by level of expression and localization. Functionally, catalytic subunit of a constitutively active serine/threonine-protein kinase complex that phosphorylates a large number of substrates containing acidic residues C-terminal to the phosphorylated serine or threonine. Regulates numerous cellular processes, such as cell cycle progression, apoptosis and transcription, as well as viral infection. May act as a regulatory node which integrates and coordinates numerous signals leading to an appropriate cellular response. During mitosis, functions as a component of the p53/TP53-dependent spindle assembly checkpoint (SAC) that maintains cyclin-B-CDK1 activity and G2 arrest in response to spindle damage. Also required for p53/TP53-mediated apoptosis, phosphorylating 'Ser-392' of p53/TP53 following UV irradiation. Phosphorylates a number of DNA repair proteins in response to DNA damage, such as MDC1, RAD9A, RAD51 and HTATSF1, promoting their recruitment to DNA damage sites. Can also negatively regulate apoptosis. Phosphorylates the caspases CASP9 and CASP2 and the apoptotic regulator NOL3. Phosphorylation protects CASP9 from cleavage and activation by CASP8, and inhibits the dimerization of CASP2 and activation of CASP8. Regulates transcription by direct phosphorylation of RNA polymerases I, II, III and IV. Also phosphorylates and regulates numerous transcription factors including NF-kappa-B, STAT1, CREB1, IRF1, IRF2, ATF1, SRF, MAX, JUN, FOS, MYC and MYB. Phosphorylates Hsp90 and its co-chaperones FKBP4 and CDC37, which is essential for chaperone function. Regulates Wnt signaling by phosphorylating CTNNB1 and the transcription factor LEF1. Acts as an ectokinase that phosphorylates several extracellular proteins. May phosphorylate histone H2A on 'Ser-1'. This chain is Casein kinase II subunit alpha' (Csnk2a2), found in Mus musculus (Mouse).